Reading from the N-terminus, the 549-residue chain is Sorting nexin-33 (549 aa).

Residues 1–61 (MALKARALYS…PASYVEILRP (61 aa)) form the SH3 domain. Positions 66 to 83 (VQVDYSGHTQGYTDSPHQ) are enriched in polar residues. The interval 66-137 (VQVDYSGHTQ…RPEYTHRPRP (72 aa)) is disordered. Residues 86–101 (YDDDEEDDDDWDDWDD) show a composition bias toward acidic residues. Positions 110–119 (SGSNGVSRSQ) are enriched in polar residues. The span at 127–137 (PRPEYTHRPRP) shows a compositional bias: basic and acidic residues. One can recognise a PX domain in the interval 205-315 (FSCSVEEPTK…HFLSCQDEKQ (111 aa)). The BAR domain maps to 346 to 549 (LQDVEERVDV…EKTLHMYDDL (204 aa)).

Belongs to the sorting nexin family.

The protein resides in the cytoplasm. Its subcellular location is the cytosol. The protein localises to the membrane. It is found in the cytoplasmic vesicle membrane. In terms of biological role, plays a role in the reorganization of the cytoskeleton, endocytosis and cellular vesicle trafficking, both during interphase and at the end of mitotic cell divisions. Required for efficient progress through mitosis and cytokinesis. Required for normal formation of the cleavage furrow at the end of mitosis. Modulates endocytosis of cell-surface proteins. Promotes membrane tubulation (in vitro). May promote the formation of macropinosomes. This Xenopus tropicalis (Western clawed frog) protein is Sorting nexin-33 (snx33).